We begin with the raw amino-acid sequence, 473 residues long: Benzoyl-CoA oxygenase component B (473 aa).

The protein belongs to the benzoyl-CoA oxygenase component B family. Monomer. The subunit composition of the active BoxA/BoxB protein complex is not known. Requires Fe cation as cofactor.

The catalysed reaction is benzoyl-CoA + NADPH + O2 + H(+) = 2,3-epoxy-2,3-dihydrobenzoyl-CoA + NADP(+) + H2O. Its function is as follows. The BoxA/BoxB complex catalyzes the aerobic reduction/oxygenation of the aromatic ring of benzoyl-CoA to form 2,3-epoxy-2,3-dihydrobenzoyl-CoA. BoxB acts as the benzoyl-CoA oxygenase, after being reduced by the reductase component BoxA. BoxAB does not act on NADH or benzoate. In Aromatoleum evansii (Azoarcus evansii), this protein is Benzoyl-CoA oxygenase component B (boxB).